The following is a 722-amino-acid chain: Serine/threonine-protein kinase dkf-1 (722 aa).

2 consecutive Phorbol-ester/DAG-type zinc fingers follow at residues 98–148 (PHVV…RNNC) and 186–236 (PHTL…ASNC). In terms of domain architecture, PH spans 279–407 (KKLEGWMMHF…QFIKESLQPP (129 aa)). The region spanning 426–685 (VLSDKTLGSG…IEQCLDHGWL (260 aa)) is the Protein kinase domain. Residues 432–440 (LGSGQFGTV) and K455 each bind ATP. The active-site Proton acceptor is D551. The residue at position 588 (T588) is a Phosphothreonine.

Belongs to the protein kinase superfamily. CAMK Ser/Thr protein kinase family. PKD subfamily. Requires Mg(2+) as cofactor. Prolonged phosphorylation at Thr-588 results in ubiquitination and degradation. In terms of tissue distribution, highly expressed in embryos and at lower levels through the four larval stages in adults. Present in a region bounded by the anterior and posterior bulbs of the pharynx and an area of the tail containing the lumbar, dorsorectal and pre-anal ganglia. Expressed in neurons.

It localises to the cytoplasm. Its subcellular location is the membrane. The enzyme catalyses L-seryl-[protein] + ATP = O-phospho-L-seryl-[protein] + ADP + H(+). It catalyses the reaction L-threonyl-[protein] + ATP = O-phospho-L-threonyl-[protein] + ADP + H(+). Its activity is regulated as follows. Activated by DAG and phorbol esters. Phorbol-ester/DAG-type domain 1 binds phorbol ester with high affinity and mediates accumulation at the cell periphery. Phorbol-ester/DAG-type domain 2 binds phorbol ester with low affinity but may mediate initial contact, resulting in a conformational change allowing previously occluded domain 1 to anchor the kinase. Phosphorylation on Thr-588 is then also required for activation and may also result in a further conformational change. Functionally, converts transient diacylglycerol (DAG) signals into prolonged physiological effects, independently of PKC. Role in the regulation of growth and neuromuscular control of movement. Involved in immune response to S.aureus bacterium by activating transcription factor hlh-30 downstream of phospholipase plc-1. The chain is Serine/threonine-protein kinase dkf-1 (dkf-1) from Caenorhabditis elegans.